The sequence spans 1141 residues: cGMP-inhibited 3',5'-cyclic phosphodiesterase 3A (1141 aa).

The tract at residues 1–41 (MAVRGEAAQDWAKPGLRGPSPAPVARGDHRCRGGSPSSPRG) is disordered. A helical transmembrane segment spans residues 62–82 (SALCAGSLSVLLALLVRLVGG). Positions 89–111 (ESSQEAAAEEEEEEGARGGVFPG) are disordered. A run of 5 helical transmembrane segments spans residues 127–147 (LQPAALLFSLLCAFFWMGLCL), 157–177 (AVALLAACCAGEALVQLSLGV), 182–202 (LLSLPAAGVLLSCLGGATWLV), 207–227 (LGVLMVALTSALRTVALVSLE), and 229–249 (FKVAWRPYLAYLAAVLGLLLA). Positions 262-309 (PAPPRERFGSQSSARTKEEIPGWKRRRRSSSVVAGEMSGCGGKSHRRT) are disordered. S310 bears the Phosphoserine mark. Positions 433-445 (RVSSTWTTTTSAT) are enriched in low complexity. The tract at residues 433 to 479 (RVSSTWTTTTSATGLPTLEPAPVRRDRSASIKPHEAPSPSAVNPDSW) is disordered. A compositionally biased stretch (basic and acidic residues) spans 454 to 467 (PVRRDRSASIKPHE). 4 positions are modified to phosphoserine: S492, S520, S524, and S533. The disordered stretch occupies residues 504–643 (HVKAKKQNRP…SDILQNDEEA (140 aa)). Positions 522-532 (VPSPSSSPPQG) are enriched in pro residues. Polar residues predominate over residues 618 to 637 (TSQVTSDYETNNNSDSSDIL). The tract at residues 669–1141 (KPILAPEPLV…EETLAPQPDL (473 aa)) is interaction with SLFN12. In terms of domain architecture, PDEase spans 674–1093 (PEPLVMDNLD…MMWKKVIEEE (420 aa)). H752 acts as the Proton donor in catalysis. H752 is an AMP binding site. H756, H836, D837, and D950 together coordinate Mn(2+). 3 residues coordinate AMP: D837, D950, and Q1001. Residue D837 participates in Mg(2+) binding. Disordered stretches follow at residues 1024–1062 (GKWVDDSDDSGDTDDPEEEEEEAETPHEEETCENSEAPR) and 1098–1141 (GTEN…QPDL). A compositionally biased stretch (acidic residues) spans 1029–1046 (DSDDSGDTDDPEEEEEEA). S1033 is modified (phosphoserine). Position 1036 is a phosphothreonine (T1036). Over residues 1098 to 1113 (GTENQAPDQAPLQHSS) the composition is skewed to polar residues. K1120 participates in a covalent cross-link: Glycyl lysine isopeptide (Lys-Gly) (interchain with G-Cter in SUMO2).

This sequence belongs to the cyclic nucleotide phosphodiesterase family. PDE3 subfamily. In terms of assembly, homodimer. Interacts with PDE3A; direct low affinity interaction which is stimulated by binding of 17beta-estradiol/E2 to PDE3A and that positively regulates the ribonuclease activity of SLFN12. It depends on Mn(2+) as a cofactor. Requires Mg(2+) as cofactor.

The protein resides in the membrane. The protein localises to the cytoplasm. Its subcellular location is the cytosol. It catalyses the reaction a nucleoside 3',5'-cyclic phosphate + H2O = a nucleoside 5'-phosphate + H(+). It carries out the reaction 3',5'-cyclic AMP + H2O = AMP + H(+). The enzyme catalyses 3',5'-cyclic GMP + H2O = GMP + H(+). The catalysed reaction is 3',5'-cyclic UMP + H2O = UMP + H(+). Functionally, cyclic nucleotide phosphodiesterase with specificity for the second messengers cAMP and cGMP, which are key regulators of many important physiological processes. Also has activity toward cUMP. Independently of its catalytic activity it is part of an E2/17beta-estradiol-induced pro-apoptotic signaling pathway. E2 stabilizes the PDE3A/SLFN12 complex in the cytosol, promoting the dephosphorylation of SLFN12 and activating its pro-apoptotic ribosomal RNA/rRNA ribonuclease activity. This apoptotic pathway might be relevant in tissues with high concentration of E2 and be for instance involved in placenta remodeling. This Rattus norvegicus (Rat) protein is cGMP-inhibited 3',5'-cyclic phosphodiesterase 3A.